A 356-amino-acid chain; its full sequence is Nicotinate-nucleotide--dimethylbenzimidazole phosphoribosyltransferase (356 aa).

The active-site Proton acceptor is the Glu317.

The protein belongs to the CobT family. In terms of assembly, homodimer.

The catalysed reaction is 5,6-dimethylbenzimidazole + nicotinate beta-D-ribonucleotide = alpha-ribazole 5'-phosphate + nicotinate + H(+). The protein operates within nucleoside biosynthesis; alpha-ribazole biosynthesis; alpha-ribazole from 5,6-dimethylbenzimidazole: step 1/2. Catalyzes the synthesis of alpha-ribazole-5'-phosphate from nicotinate mononucleotide (NAMN) and 5,6-dimethylbenzimidazole (DMB). This chain is Nicotinate-nucleotide--dimethylbenzimidazole phosphoribosyltransferase, found in Salmonella dublin (strain CT_02021853).